Here is a 201-residue protein sequence, read N- to C-terminus: 3-isopropylmalate dehydratase small subunit (201 aa).

It belongs to the LeuD family. LeuD type 1 subfamily. As to quaternary structure, heterodimer of LeuC and LeuD.

It carries out the reaction (2R,3S)-3-isopropylmalate = (2S)-2-isopropylmalate. The protein operates within amino-acid biosynthesis; L-leucine biosynthesis; L-leucine from 3-methyl-2-oxobutanoate: step 2/4. Its function is as follows. Catalyzes the isomerization between 2-isopropylmalate and 3-isopropylmalate, via the formation of 2-isopropylmaleate. In Ruegeria pomeroyi (strain ATCC 700808 / DSM 15171 / DSS-3) (Silicibacter pomeroyi), this protein is 3-isopropylmalate dehydratase small subunit.